Consider the following 895-residue polypeptide: Cellulose 1,4-beta-cellobiosidase (895 aa).

The signal sequence occupies residues 1–27 (MNFRRMLCAAIVLTIVLSIMLPSTVFA). A CBM-cenC domain is found at 40–199 (NDLLYERTFD…YLDDVSLYDP (160 aa)). Positions 199–240 (PRFVKPVEYVLPQPDVRVNQVGYLPFAKKYATVVSSSTSPLK) are linker. The segment at 241–815 (WQLLNSANQV…WVTAYLDEID (575 aa)) is catalytic. The Nucleophile role is filled by Asp386. Catalysis depends on residues His737, Asp786, and Glu795. Positions 828–894 (PEVIYGDCNG…ILKEIDVLPH (67 aa)) constitute a Dockerin domain.

This sequence belongs to the glycosyl hydrolase 9 (cellulase E) family.

It is found in the secreted. It catalyses the reaction Hydrolysis of (1-&gt;4)-beta-D-glucosidic linkages in cellulose and cellotetraose, releasing cellobiose from the non-reducing ends of the chains.. Inhibited by cellobiose. The chain is Cellulose 1,4-beta-cellobiosidase (celK) from Acetivibrio thermocellus (Hungateiclostridium thermocellum).